The sequence spans 541 residues: Cytochrome bc1 complex cytochrome b subunit (541 aa).

A helical transmembrane segment spans residues 36–56; the sequence is FLLGEIALYSFIILILTGVYL. Residues H105 and H119 each contribute to the heme site. Helical transmembrane passes span 109-129, 137-157, and 169-189; these read ALMF…TGAF, WVIG…GYSL, and IMSA…WMIF. Heme is bound by residues H206 and H221. A run of 5 helical transmembrane segments spans residues 207-227, 256-276, 325-345, 371-391, and 408-428; these read VLII…LVWY, SVAF…VTTI, VFWV…YPWI, LGVM…NDIW, and IGLI…CIGL.

Belongs to the cytochrome b family. In terms of assembly, the cytochrome bc1 complex is composed of a cytochrome b (QcrB), the Rieske protein iron-sulfur (QcrA) and a diheme cytochrome c (QcrC) subunit. Heme is required as a cofactor.

It localises to the cell membrane. The enzyme catalyses a quinol + 2 Fe(III)-[cytochrome c](out) = a quinone + 2 Fe(II)-[cytochrome c](out) + 2 H(+)(out). Functionally, cytochrome b subunit of the cytochrome bc1 complex, an essential component of the respiratory electron transport chain required for ATP synthesis. The bc1 complex catalyzes the oxidation of menaquinol and the reduction of cytochrome c in the respiratory chain. The bc1 complex operates through a Q-cycle mechanism that couples electron transfer to generation of the proton gradient that drives ATP synthesis. The sequence is that of Cytochrome bc1 complex cytochrome b subunit (qcrB) from Corynebacterium efficiens (strain DSM 44549 / YS-314 / AJ 12310 / JCM 11189 / NBRC 100395).